A 135-amino-acid chain; its full sequence is Cytochrome b-c1 complex subunit 6, mitochondrial (135 aa).

Residues 1-70 (MSFFRDLLES…ETADPLDTLR (70 aa)) are disordered. Acidic residues predominate over residues 19-64 (EPVEDVEVEQPEDAPEEEVSEETVEEEEDDDEDDDEDDEEEEETAD).

This sequence belongs to the UQCRH/QCR6 family. Component of the ubiquinol-cytochrome c oxidoreductase (cytochrome b-c1 complex, complex III, CIII), a multisubunit enzyme composed of 10 subunits. The complex is composed of 3 respiratory subunits cytochrome b (COB), cytochrome c1 (CYT1) and Rieske protein (RIP1), 2 core protein subunits COR1 and QCR2, and 5 low-molecular weight protein subunits QCR6, QCR7, QCR8, QCR9 and QCR10. The complex exists as an obligatory dimer and forms supercomplexes (SCs) in the inner mitochondrial membrane with a monomer or a dimer of cytochrome c oxidase (complex IV, CIV), resulting in 2 different assemblies (supercomplexes III(2)IV and III(2)IV(2)).

It is found in the mitochondrion inner membrane. Its function is as follows. Component of the ubiquinol-cytochrome c oxidoreductase, a multisubunit transmembrane complex that is part of the mitochondrial electron transport chain which drives oxidative phosphorylation. The complex plays an important role in the uptake of multiple carbon sources present in different host niches. This is Cytochrome b-c1 complex subunit 6, mitochondrial from Candida albicans (strain SC5314 / ATCC MYA-2876) (Yeast).